Consider the following 225-residue polypeptide: Translation initiation factor 6 (225 aa).

It belongs to the eIF-6 family.

In terms of biological role, binds to the 50S ribosomal subunit and prevents its association with the 30S ribosomal subunit to form the 70S initiation complex. This chain is Translation initiation factor 6, found in Hyperthermus butylicus (strain DSM 5456 / JCM 9403 / PLM1-5).